A 254-amino-acid polypeptide reads, in one-letter code: 4-hydroxy-tetrahydrodipicolinate reductase (254 aa).

7–12 provides a ligand contact to NAD(+); it reads GASGRI. An NADP(+)-binding site is contributed by arginine 35. NAD(+) contacts are provided by residues 91–93 and 115–118; these read GTT and AHNM. Histidine 147 functions as the Proton donor/acceptor in the catalytic mechanism. Residue histidine 148 participates in (S)-2,3,4,5-tetrahydrodipicolinate binding. Residue lysine 151 is the Proton donor of the active site. Residue 157-158 participates in (S)-2,3,4,5-tetrahydrodipicolinate binding; that stretch reads GT.

Belongs to the DapB family.

The protein resides in the cytoplasm. It carries out the reaction (S)-2,3,4,5-tetrahydrodipicolinate + NAD(+) + H2O = (2S,4S)-4-hydroxy-2,3,4,5-tetrahydrodipicolinate + NADH + H(+). The enzyme catalyses (S)-2,3,4,5-tetrahydrodipicolinate + NADP(+) + H2O = (2S,4S)-4-hydroxy-2,3,4,5-tetrahydrodipicolinate + NADPH + H(+). It participates in amino-acid biosynthesis; L-lysine biosynthesis via DAP pathway; (S)-tetrahydrodipicolinate from L-aspartate: step 4/4. Catalyzes the conversion of 4-hydroxy-tetrahydrodipicolinate (HTPA) to tetrahydrodipicolinate. In Helicobacter pylori (strain HPAG1), this protein is 4-hydroxy-tetrahydrodipicolinate reductase.